A 345-amino-acid polypeptide reads, in one-letter code: Beta-hexosaminidase (345 aa).

Residues Asp60, Arg68, Arg132, and 162-163 (KH) contribute to the substrate site. His175 functions as the Proton donor/acceptor in the catalytic mechanism. The active-site Nucleophile is Asp247.

Belongs to the glycosyl hydrolase 3 family. NagZ subfamily.

It localises to the cytoplasm. The enzyme catalyses Hydrolysis of terminal non-reducing N-acetyl-D-hexosamine residues in N-acetyl-beta-D-hexosaminides.. Its pathway is cell wall biogenesis; peptidoglycan recycling. Its function is as follows. Plays a role in peptidoglycan recycling by cleaving the terminal beta-1,4-linked N-acetylglucosamine (GlcNAc) from peptide-linked peptidoglycan fragments, giving rise to free GlcNAc, anhydro-N-acetylmuramic acid and anhydro-N-acetylmuramic acid-linked peptides. In Actinobacillus pleuropneumoniae serotype 5b (strain L20), this protein is Beta-hexosaminidase.